A 508-amino-acid polypeptide reads, in one-letter code: Phosphoglycerate kinase A (508 aa).

Residues Val32, Asp33, Phe34, Asn35, Arg48, Ser70, His71, Gly73, Arg74, Arg224, His260, and Arg261 each coordinate (2R)-3-phosphoglycerate. Residues Gly306 and Ala307 each contribute to the ADP site. Gly306 serves as a coordination point for CDP. Positions 307 and 308 each coordinate AMP. Ala307 serves as a coordination point for ATP. Residue Ala307 coordinates Mg(2+). Lys308 is a binding site for (2R)-3-phosphoglycerate. Glu311 contributes to the CDP binding site. Residue Glu311 participates in Mg(2+) binding. Residues Lys312 and Gly330 each coordinate ADP. Lys312 serves as a coordination point for AMP. Lys312 lines the ATP pocket. Gly330 lines the CDP pocket. AMP contacts are provided by Ala331 and Ala403. Residues Ala331 and Ala403 each coordinate ATP. 2 residues coordinate ADP: Ala403 and Asn427. The CDP site is built by Gly428 and Phe433. ADP contacts are provided by Phe433, Glu434, Glu466, and Ser467. AMP is bound at residue Glu434. Residues Glu434, Glu466, and Ser467 each contribute to the ATP site. Glu466 serves as a coordination point for Mg(2+).

Belongs to the phosphoglycerate kinase family. Monomer. It depends on Mg(2+) as a cofactor.

The enzyme catalyses (2R)-3-phosphoglycerate + ATP = (2R)-3-phospho-glyceroyl phosphate + ADP. It participates in carbohydrate degradation; glycolysis; pyruvate from D-glyceraldehyde 3-phosphate: step 2/5. In Trypanosoma brucei brucei, this protein is Phosphoglycerate kinase A.